The chain runs to 203 residues: Glycerol-3-phosphate acyltransferase (203 aa).

Helical transmembrane passes span 3-23, 51-71, 74-94, 116-136, 140-160, and 164-178; these read ILLA…VVVS, KAAI…VWLV, FGIG…LGHL, AVHP…AFFF, SLAA…LFGT, and PVAW…LLIW.

Belongs to the PlsY family. Probably interacts with PlsX.

It localises to the cell inner membrane. It catalyses the reaction an acyl phosphate + sn-glycerol 3-phosphate = a 1-acyl-sn-glycero-3-phosphate + phosphate. It functions in the pathway lipid metabolism; phospholipid metabolism. Its function is as follows. Catalyzes the transfer of an acyl group from acyl-phosphate (acyl-PO(4)) to glycerol-3-phosphate (G3P) to form lysophosphatidic acid (LPA). This enzyme utilizes acyl-phosphate as fatty acyl donor, but not acyl-CoA or acyl-ACP. The polypeptide is Glycerol-3-phosphate acyltransferase (Burkholderia pseudomallei (strain 1710b)).